A 379-amino-acid chain; its full sequence is Peritrophin-48 (379 aa).

The signal sequence occupies residues 1–20; that stretch reads MKAKTLTATLALILLAFAQA. 2 Chitin-binding type-2 domains span residues 25-83 and 86-143; these read ASYC…NCFF and ANPC…NTGN. 2 disulfides stabilise this stretch: Cys60-Cys73 and Cys120-Cys133. N-linked (GlcNAc...) asparagine glycans are attached at residues Asn150 and Asn168. Chitin-binding type-2 domains lie at 151–208, 224–283, and 285–356; these read LSVC…ACSR, TSPC…RTLK, and CNRC…ACEN. Residues Cys185 and Cys198 are joined by a disulfide bond. N-linked (GlcNAc...) asparagine glycans are attached at residues Asn247 and Asn252. A disulfide bridge links Cys324 with Cys337. 3 N-linked (GlcNAc...) asparagine glycosylation sites follow: Asn341, Asn356, and Asn373.

In terms of processing, glycosylated. Larval peritrophic membrane.

Binds chitin and may bind related oligosaccharide structures. In Chrysomya bezziana (Old world screw-worm fly), this protein is Peritrophin-48.